We begin with the raw amino-acid sequence, 519 residues long: Putative cytochrome P450 CYP13A10 (519 aa).

A helical transmembrane segment spans residues 3–23 (VILLAIPTLFIGFISYYLWIW). Residue Cys465 participates in heme binding.

It belongs to the cytochrome P450 family. It depends on heme as a cofactor.

Its subcellular location is the membrane. In terms of biological role, cytochromes P450 are a group of heme-thiolate monooxygenases. They oxidize a variety of structurally unrelated compounds, including steroids, fatty acids, and xenobiotics. This chain is Putative cytochrome P450 CYP13A10 (cyp-13A10), found in Caenorhabditis elegans.